We begin with the raw amino-acid sequence, 306 residues long: Porphobilinogen deaminase (306 aa).

The residue at position 234 (Cys-234) is an S-(dipyrrolylmethanemethyl)cysteine.

It belongs to the HMBS family. Monomer. Dipyrromethane is required as a cofactor.

It catalyses the reaction 4 porphobilinogen + H2O = hydroxymethylbilane + 4 NH4(+). It functions in the pathway porphyrin-containing compound metabolism; protoporphyrin-IX biosynthesis; coproporphyrinogen-III from 5-aminolevulinate: step 2/4. Its function is as follows. Tetrapolymerization of the monopyrrole PBG into the hydroxymethylbilane pre-uroporphyrinogen in several discrete steps. The protein is Porphobilinogen deaminase of Mycobacteroides abscessus (strain ATCC 19977 / DSM 44196 / CCUG 20993 / CIP 104536 / JCM 13569 / NCTC 13031 / TMC 1543 / L948) (Mycobacterium abscessus).